Here is a 187-residue protein sequence, read N- to C-terminus: Elongation factor P (187 aa).

It belongs to the elongation factor P family.

The protein localises to the cytoplasm. It functions in the pathway protein biosynthesis; polypeptide chain elongation. Involved in peptide bond synthesis. Stimulates efficient translation and peptide-bond synthesis on native or reconstituted 70S ribosomes in vitro. Probably functions indirectly by altering the affinity of the ribosome for aminoacyl-tRNA, thus increasing their reactivity as acceptors for peptidyl transferase. The protein is Elongation factor P of Nocardia farcinica (strain IFM 10152).